A 375-amino-acid chain; its full sequence is Anhydro-N-acetylmuramic acid kinase (375 aa).

ATP is bound at residue Gly18 to Asp25.

Belongs to the anhydro-N-acetylmuramic acid kinase family.

The catalysed reaction is 1,6-anhydro-N-acetyl-beta-muramate + ATP + H2O = N-acetyl-D-muramate 6-phosphate + ADP + H(+). It participates in amino-sugar metabolism; 1,6-anhydro-N-acetylmuramate degradation. It functions in the pathway cell wall biogenesis; peptidoglycan recycling. Its function is as follows. Catalyzes the specific phosphorylation of 1,6-anhydro-N-acetylmuramic acid (anhMurNAc) with the simultaneous cleavage of the 1,6-anhydro ring, generating MurNAc-6-P. Is required for the utilization of anhMurNAc either imported from the medium or derived from its own cell wall murein, and thus plays a role in cell wall recycling. The sequence is that of Anhydro-N-acetylmuramic acid kinase from Rhodospirillum rubrum (strain ATCC 11170 / ATH 1.1.1 / DSM 467 / LMG 4362 / NCIMB 8255 / S1).